We begin with the raw amino-acid sequence, 483 residues long: Altronate oxidoreductase (483 aa).

18 to 29 (IIQFGEGNFLRA) is an NAD(+) binding site.

This sequence belongs to the mannitol dehydrogenase family. UxaB subfamily.

The catalysed reaction is D-altronate + NAD(+) = keto-D-tagaturonate + NADH + H(+). It functions in the pathway carbohydrate metabolism; pentose and glucuronate interconversion. This is Altronate oxidoreductase from Escherichia coli (strain 55989 / EAEC).